Here is a 319-residue protein sequence, read N- to C-terminus: Myoblast determination protein 1 (319 aa).

Met-1 participates in a covalent cross-link: Peptide (Met-Gly) (interchain with G-Cter in ubiquitin). Residue Lys-104 is modified to N6-methyllysine; by EHMT2. The 52-residue stretch at 109–160 (DRRKAATMRERRRLSKVNEAFETLKRCTSSNPNQRLPKVEILRNAIRYIEGL) folds into the bHLH domain. Disordered regions lie at residues 174-222 (AAAA…GARR) and 267-319 (PALL…YQVL). Residues 197–207 (SDASSPRSNCS) show a composition bias toward polar residues. The segment covering 267–276 (PALLLADAPP) has biased composition (low complexity).

As to quaternary structure, efficient DNA binding requires dimerization with another bHLH protein. Seems to form active heterodimers with ITF-2. Interacts with SUV39H1. Interacts with DDX5. Interacts with CHD2. Interacts with TSC22D3. Interacts with SETD3. Interacts with P-TEFB complex; promotes the transcriptional activity of MYOD1 through its CDK9-mediated phosphorylation. Interacts with CSRP3. Interacts with NUPR1. In terms of processing, phosphorylated by CDK9. This phosphorylation promotes its function in muscle differentiation. Acetylated by a complex containing EP300 and PCAF. The acetylation is essential to activate target genes. Conversely, its deacetylation by SIRT1 inhibits its function. Post-translationally, ubiquitinated on the N-terminus; which is required for proteasomal degradation. In terms of processing, methylation at Lys-104 by EHMT2/G9a inhibits myogenic activity.

It is found in the nucleus. Functionally, acts as a transcriptional activator that promotes transcription of muscle-specific target genes and plays a role in muscle differentiation. Together with MYF5 and MYOG, co-occupies muscle-specific gene promoter core region during myogenesis. Induces fibroblasts to differentiate into myoblasts. Interacts with and is inhibited by the twist protein. This interaction probably involves the basic domains of both proteins. The sequence is that of Myoblast determination protein 1 (MYOD1) from Ovis aries (Sheep).